The primary structure comprises 506 residues: Cysteine--tRNA ligase (506 aa).

Residue Cys-34 participates in Zn(2+) binding. The 'HIGH' region signature appears at 36-46 (PTVYDFAHIGN). Cys-230, His-269, and Glu-273 together coordinate Zn(2+). The short motif at 302–306 (KMSKS) is the 'KMSKS' region element. Residue Lys-305 coordinates ATP.

The protein belongs to the class-I aminoacyl-tRNA synthetase family. Monomer. Zn(2+) serves as cofactor.

Its subcellular location is the cytoplasm. The enzyme catalyses tRNA(Cys) + L-cysteine + ATP = L-cysteinyl-tRNA(Cys) + AMP + diphosphate. The chain is Cysteine--tRNA ligase from Brucella melitensis biotype 2 (strain ATCC 23457).